Reading from the N-terminus, the 180-residue chain is Outer membrane protein YfaZ (180 aa).

Positions 1 to 21 are cleaved as a signal peptide; that stretch reads MKKIALAGLAGMLLVSASVNA.

Its subcellular location is the cell outer membrane. This chain is Outer membrane protein YfaZ (yfaZ), found in Escherichia coli (strain K12).